A 377-amino-acid polypeptide reads, in one-letter code: tRNA/tmRNA (uracil-C(5))-methyltransferase (377 aa).

5 residues coordinate S-adenosyl-L-methionine: Gln-199, Tyr-227, Asn-232, Glu-248, and Asp-308. Residue Cys-333 is the Nucleophile of the active site. Glu-367 functions as the Proton acceptor in the catalytic mechanism.

It belongs to the class I-like SAM-binding methyltransferase superfamily. RNA M5U methyltransferase family. TrmA subfamily.

It catalyses the reaction uridine(54) in tRNA + S-adenosyl-L-methionine = 5-methyluridine(54) in tRNA + S-adenosyl-L-homocysteine + H(+). It carries out the reaction uridine(341) in tmRNA + S-adenosyl-L-methionine = 5-methyluridine(341) in tmRNA + S-adenosyl-L-homocysteine + H(+). In terms of biological role, dual-specificity methyltransferase that catalyzes the formation of 5-methyluridine at position 54 (m5U54) in all tRNAs, and that of position 341 (m5U341) in tmRNA (transfer-mRNA). The sequence is that of tRNA/tmRNA (uracil-C(5))-methyltransferase from Aeromonas salmonicida (strain A449).